Reading from the N-terminus, the 314-residue chain is Olfactory receptor 52H1 (314 aa).

The Extracellular segment spans residues 1-32 (MIIFNLSSYNPGPFILVGIPGLEQFHVWIGIP). Asn5 carries an N-linked (GlcNAc...) asparagine glycan. Residues 33–53 (FCIIYIVAVVGNCILLYLIVV) form a helical membrane-spanning segment. Residues 54–59 (EHSLHE) are Cytoplasmic-facing. The helical transmembrane segment at 60 to 80 (PMFFFLSMLAMTDLILSTAGV) threads the bilayer. At 81 to 101 (PKALSIFWLGAREITFPGCLT) the chain is on the extracellular side. Cysteines 99 and 181 form a disulfide. The chain crosses the membrane as a helical span at residues 102–122 (QMFFLHYNFVLDSAILMAMAF). The Cytoplasmic portion of the chain corresponds to 123-149 (DHYVAICSPLRYTTILTPKTIIKSAMG). A helical transmembrane segment spans residues 150 to 170 (ISFRSFCIILPDVFLLTCLPF). Residues 171-197 (CRTRIIPHTYCEHIGVAQLACADISIN) are Extracellular-facing. A helical membrane pass occupies residues 198-218 (FWYGFCVPIMTVISDVILIAV). Topologically, residues 219–242 (SYAHILCAVFGLPSQDACQKALGT) are cytoplasmic. The chain crosses the membrane as a helical span at residues 243–263 (CGSHVCVILMFYTPAFFSILA). Residues 264 to 275 (HRFGHNVSRTFH) lie on the Extracellular side of the membrane. Asn269 carries an N-linked (GlcNAc...) asparagine glycan. A helical transmembrane segment spans residues 276-296 (IMFANLYIVIPPALNPMVYGV). The Cytoplasmic portion of the chain corresponds to 297–314 (KTKQIRDKVILLFSKGTG).

Belongs to the G-protein coupled receptor 1 family.

It is found in the membrane. In terms of biological role, odorant receptor. The chain is Olfactory receptor 52H1 (OR52H1) from Homo sapiens (Human).